The primary structure comprises 1396 residues: DNA-directed RNA polymerase subunit beta' (1396 aa).

The Zn(2+) site is built by Cys70, Cys72, Cys85, and Cys88. Positions 460, 462, and 464 each coordinate Mg(2+). 4 residues coordinate Zn(2+): Cys807, Cys881, Cys888, and Cys891. Residues 1361-1378 (EPEEIEEPVPEDLEDETA) are compositionally biased toward acidic residues. A disordered region spans residues 1361–1396 (EPEEIEEPVPEDLEDETAGADSAQAASEESVAEGKD). Positions 1379 to 1389 (GADSAQAASEE) are enriched in low complexity.

The protein belongs to the RNA polymerase beta' chain family. The RNAP catalytic core consists of 2 alpha, 1 beta, 1 beta' and 1 omega subunit. When a sigma factor is associated with the core the holoenzyme is formed, which can initiate transcription. It depends on Mg(2+) as a cofactor. The cofactor is Zn(2+).

The enzyme catalyses RNA(n) + a ribonucleoside 5'-triphosphate = RNA(n+1) + diphosphate. Its function is as follows. DNA-dependent RNA polymerase catalyzes the transcription of DNA into RNA using the four ribonucleoside triphosphates as substrates. This Syntrophotalea carbinolica (strain DSM 2380 / NBRC 103641 / GraBd1) (Pelobacter carbinolicus) protein is DNA-directed RNA polymerase subunit beta'.